The primary structure comprises 356 residues: Histidinol-phosphate aminotransferase (356 aa).

Position 214 is an N6-(pyridoxal phosphate)lysine (Lys-214).

This sequence belongs to the class-II pyridoxal-phosphate-dependent aminotransferase family. Histidinol-phosphate aminotransferase subfamily. Homodimer. Pyridoxal 5'-phosphate serves as cofactor.

It carries out the reaction L-histidinol phosphate + 2-oxoglutarate = 3-(imidazol-4-yl)-2-oxopropyl phosphate + L-glutamate. It participates in amino-acid biosynthesis; L-histidine biosynthesis; L-histidine from 5-phospho-alpha-D-ribose 1-diphosphate: step 7/9. In Escherichia fergusonii (strain ATCC 35469 / DSM 13698 / CCUG 18766 / IAM 14443 / JCM 21226 / LMG 7866 / NBRC 102419 / NCTC 12128 / CDC 0568-73), this protein is Histidinol-phosphate aminotransferase.